Reading from the N-terminus, the 655-residue chain is Fructose-1,6-bisphosphatase class 3 (655 aa).

This sequence belongs to the FBPase class 3 family. Requires Mn(2+) as cofactor.

It catalyses the reaction beta-D-fructose 1,6-bisphosphate + H2O = beta-D-fructose 6-phosphate + phosphate. Its pathway is carbohydrate biosynthesis; gluconeogenesis. This is Fructose-1,6-bisphosphatase class 3 from Porphyromonas gingivalis (strain ATCC BAA-308 / W83).